Here is an 822-residue protein sequence, read N- to C-terminus: Ribonucleoside-diphosphate reductase large subunit (822 aa).

Residues Thr-249, 264–265 (SC), Gly-295, 470–474 (NLCTE), and 651–655 (PTAAS) each bind substrate. Cysteines 265 and 487 form a disulfide. The Proton acceptor role is filled by Asn-470. The active-site Cysteine radical intermediate is Cys-472. The active-site Proton acceptor is Glu-474.

This sequence belongs to the ribonucleoside diphosphate reductase large chain family. Heterotetramer composed of a homodimer of the large subunit (R1) and a homodimer of the small subunit (R2). Larger multisubunit protein complex are also active, composed of (R1)n(R2)n.

It catalyses the reaction a 2'-deoxyribonucleoside 5'-diphosphate + [thioredoxin]-disulfide + H2O = a ribonucleoside 5'-diphosphate + [thioredoxin]-dithiol. Its function is as follows. Ribonucleoside-diphosphate reductase holoenzyme provides the precursors necessary for viral DNA synthesis. Allows virus growth in non-dividing cells, as well as reactivation from latency in infected hosts. Catalyzes the biosynthesis of deoxyribonucleotides from the corresponding ribonucleotides. The protein is Ribonucleoside-diphosphate reductase large subunit of Gallus gallus (Chicken).